The sequence spans 213 residues: High frequency lysogenization protein HflD homolog (213 aa).

Positions 79–126 form a coiled coil; sequence QGLNAELTRYTLSLMVLERKLSSAKGALDTLGNRINGLQRQLEHFDLQ.

This sequence belongs to the HflD family.

The protein resides in the cytoplasm. The protein localises to the cell inner membrane. The polypeptide is High frequency lysogenization protein HflD homolog (Shigella dysenteriae serotype 1 (strain Sd197)).